Here is a 266-residue protein sequence, read N- to C-terminus: Putative carbamate hydrolase RutD (266 aa).

Belongs to the AB hydrolase superfamily. Hydrolase RutD family.

It catalyses the reaction carbamate + 2 H(+) = NH4(+) + CO2. Involved in pyrimidine catabolism. May facilitate the hydrolysis of carbamate, a reaction that can also occur spontaneously. This is Putative carbamate hydrolase RutD from Escherichia coli O45:K1 (strain S88 / ExPEC).